The following is a 248-amino-acid chain: Glycoprotein BILF2 (248 aa).

An N-terminal signal peptide occupies residues 1–17; sequence MTHLVLLLCCCVGSVCA. Positions 19-125 constitute an Ig-like domain; it reads FSDLVKFENV…NVTLRNCSVA (107 aa). N-linked (GlcNAc...) asparagine; by host glycosylation is found at Asn-27, Asn-37, Asn-45, Asn-73, Asn-83, Asn-92, Asn-95, Asn-104, Asn-116, Asn-121, Asn-131, and Asn-144. Residues Cys-40 and Cys-115 are joined by a disulfide bond. Positions 167-191 are disordered; it reads VSHTTSTSHRPHRRPVSKRPTHKPV. Residues 175–188 show a composition bias toward basic residues; that stretch reads HRPHRRPVSKRPTH. A helical transmembrane segment spans residues 210–230; that stretch reads WALLLITCAVVAPVLLIIIIS.

This sequence belongs to the Epstein-Barr virus BILF2 protein family.

The protein localises to the membrane. The polypeptide is Glycoprotein BILF2 (Epstein-Barr virus (strain B95-8) (HHV-4)).